The primary structure comprises 407 residues: MRRTPAAERLSELGFPPRRGSQEPPFPLGVTRGWGGWPIEKRCEGPRPVPFSERSAEDGREQPAHGSGILWRVRTRLSLCRDPEPPPPPPPLCLLRVSLLCALRAGGRGSRWSEDSARLLLLPPAGASGSLKAERSSSTPYAGRMLESSGCKALKEGVLEKRSDGLLQLWKKKCCILTEEGLLLIPPKQVQHQQQQQQQQQPGQGTAEPSQPSGPAVTSLEPPAKLKELHFSNMKTVDCVERKGKYMYFTVVMAEGKEIDFRCPQDQGWNAEITLQMVQYKNRQAILAVKSTRQKQQHLVQQQPPQTQQIQPQPQQPQIQPQPQPQIQPQPQPQPQPQPQPQQQPQPQQLHSYPHPHPHLYPHPHPHAHSHPHPHPHPHPHQLQHAHQPLHSQPQGHRLLRSTSNSA.

Composition is skewed to basic and acidic residues over residues 1–11 (MRRTPAAERLS) and 54–63 (RSAEDGREQP). Residues 1 to 67 (MRRTPAAERL…DGREQPAHGS (67 aa)) form a disordered region. One can recognise a PH domain in the interval 149-184 (SGCKALKEGVLEKRSDGLLQLWKKKCCILTEEGLLL). Disordered stretches follow at residues 188–224 (KQVQHQQQQQQQQQPGQGTAEPSQPSGPAVTSLEPPA) and 296–407 (QQHL…SNSA). Composition is skewed to low complexity over residues 189 to 204 (QVQHQQQQQQQQQPGQ) and 297 to 319 (QHLVQQQPPQTQQIQPQPQQPQI). Residues 312 to 348 (PQPQQPQIQPQPQPQIQPQPQPQPQPQPQPQQQPQPQ) are 15 X 2 AA repeats of P-Q. Positions 320–344 (QPQPQPQIQPQPQPQPQPQPQPQQQ) are enriched in pro residues. Residues 354-381 (PHPHPHLYPHPHPHAHSHPHPHPHPHPH) are 11 X 2 AA repeats of P-H. Residues 354-384 (PHPHPHLYPHPHPHAHSHPHPHPHPHPHQLQ) show a composition bias toward basic residues. A compositionally biased stretch (low complexity) spans 385 to 395 (HAHQPLHSQPQ).

As to quaternary structure, interacts with RPL14, EIF3S7 and PABPC4.

It localises to the cytoplasm. The protein localises to the cytoplasmic vesicle. Its subcellular location is the nucleus. It is found in the nucleolus. Functionally, seems to be involved in regulation of apoptosis. May be involved in detachment-mediated programmed cell death. May mediate apoptosis during neuronal development. May be involved in regulation of anti-apoptotic effects of IGF1. May be involved in translational regulation. The protein is Pleckstrin homology-like domain family A member 1 (Phlda1) of Rattus norvegicus (Rat).